Reading from the N-terminus, the 157-residue chain is MTKTTRLTPGDKAPAFTLPDADGNNVSLADYRGRRVIVYFYPAASTPGCTKQACDFRDNLGDFTTAGLNVVGISPDKPEKLATFRDAQGLTFPLLSDPDREVLTAWGAYGEKQMYGKTVQGVIRSTFVVDEDGKIVVAQYNVKATGHVAKLRRDLSV.

A Thioredoxin domain is found at 7–157 (LTPGDKAPAF…VAKLRRDLSV (151 aa)). The active-site Cysteine sulfenic acid (-SOH) intermediate is the cysteine 49. Cysteine 49 and cysteine 54 are oxidised to a cystine.

This sequence belongs to the peroxiredoxin family. BCP/PrxQ subfamily. Monomer.

The enzyme catalyses a hydroperoxide + [thioredoxin]-dithiol = an alcohol + [thioredoxin]-disulfide + H2O. Functionally, thiol-specific peroxidase that catalyzes the reduction of hydrogen peroxide and organic hydroperoxides to water and alcohols, respectively. Plays a role in cell protection against oxidative stress by detoxifying peroxides and as sensor of hydrogen peroxide-mediated signaling events. This chain is Putative peroxiredoxin MT2597 (bcp), found in Mycobacterium tuberculosis (strain CDC 1551 / Oshkosh).